The chain runs to 90 residues: MSRTVFCVRLNKEADGLDFQLYPGELGKRIFDNISKEAWGQWQHKQTMLINEKKLNMMDPEHRKLLETEMEGFLFDGKDVVIDGYTPPSE.

It belongs to the Fe(2+)-trafficking protein family.

Its function is as follows. Could be a mediator in iron transactions between iron acquisition and iron-requiring processes, such as synthesis and/or repair of Fe-S clusters in biosynthetic enzymes. The chain is Probable Fe(2+)-trafficking protein from Aliivibrio fischeri (strain ATCC 700601 / ES114) (Vibrio fischeri).